The primary structure comprises 449 residues: Exodeoxyribonuclease 7 large subunit (449 aa).

Belongs to the XseA family. Heterooligomer composed of large and small subunits.

It is found in the cytoplasm. The catalysed reaction is Exonucleolytic cleavage in either 5'- to 3'- or 3'- to 5'-direction to yield nucleoside 5'-phosphates.. In terms of biological role, bidirectionally degrades single-stranded DNA into large acid-insoluble oligonucleotides, which are then degraded further into small acid-soluble oligonucleotides. This Salmonella schwarzengrund (strain CVM19633) protein is Exodeoxyribonuclease 7 large subunit.